Consider the following 341-residue polypeptide: Probable sulfurtransferase (341 aa).

C40, C42, C58, and C61 together coordinate Zn(2+). Position 88 (G88) interacts with ATP. [4Fe-4S] cluster contacts are provided by C176 and C179. ATP-binding residues include R183 and G202. [4Fe-4S] cluster is bound at residue C267. Zn(2+)-binding residues include C316, C319, C328, and C331.

It belongs to the TtcA family. [4Fe-4S] cluster is required as a cofactor. It depends on Mg(2+) as a cofactor.

The polypeptide is Probable sulfurtransferase (Methanocaldococcus jannaschii (strain ATCC 43067 / DSM 2661 / JAL-1 / JCM 10045 / NBRC 100440) (Methanococcus jannaschii)).